Reading from the N-terminus, the 371-residue chain is Cyanide hydratase (371 aa).

A CN hydrolase domain is found at 6–285 (YKAAAVTSEP…DGLLYVDIDL (280 aa)). Catalysis depends on E46, which acts as the Proton acceptor. The active site involves K128. C163 (nucleophile) is an active-site residue. Over residues 339-353 (GLNRPLDPPKDERHG) the composition is skewed to basic and acidic residues. The tract at residues 339 to 371 (GLNRPLDPPKDERHGIVGVAGQKSAEQRKAGDL) is disordered.

It belongs to the carbon-nitrogen hydrolase superfamily. Nitrilase family. In terms of assembly, oligomer of dimers, forming left-handed helical fibers.

The catalysed reaction is formamide = hydrogen cyanide + H2O. Functionally, catalyzes the hydration of cyanide to formamide. Degradation of cyanide may be important for plant pathogenic fungi in infection of cyanogenic plants. Also acts on 2-cyanopyridine, fumaronitrile and benzonitrile, albeit at a lower rate. The protein is Cyanide hydratase (nit) of Stereum hirsutum (strain FP-91666) (White-rot fungus).